We begin with the raw amino-acid sequence, 175 residues long: DM domain-containing protein mab-23 (175 aa).

Positions 8-56 form a DNA-binding region, DM; it reads CQLCANHGIFNQPKKGHKQKCPYRTCPCSLCALNTKRRALDQIERQLKH. Positions 58–93 are disordered; that stretch reads NEPMTGQTATSMASPTPECPLSPTTPKMTPHTPTSG. The span at 59–71 shows a compositional bias: polar residues; the sequence is EPMTGQTATSMAS. Residues 81–91 show a composition bias toward low complexity; it reads TTPKMTPHTPT.

Expressed in a limited number of non-sex-specific tissues in males, including 6-8 unidentified neurons of the head, ventral body wall muscle, and the PHCL/R neurons.

The protein resides in the nucleus. In terms of biological role, probable transcription factor that plays a role in the development of the dopaminergic neurons of the male-specific genital sensilla (simple sense organs) known as rays, by negatively regulating the activity of the transcription factor ast-1. Involved in male mating behavior, probably as a result of a role in the differentiation of male-specific diagonal muscles. Required for development of the male proctodeum. May be dispensable in hermaphrodites. The protein is DM domain-containing protein mab-23 of Caenorhabditis elegans.